The sequence spans 521 residues: Methionine--tRNA ligase (521 aa).

The short motif at 14-24 is the 'HIGH' region element; it reads YYSSGNPHIGH. The Zn(2+) site is built by Cys129, Cys132, Cys151, and His155. A 'KMSKS' region motif is present at residues 306–310; the sequence is KMSKS. Lys309 contributes to the ATP binding site.

The protein belongs to the class-I aminoacyl-tRNA synthetase family. MetG type 2A subfamily. As to quaternary structure, monomer. Zn(2+) is required as a cofactor.

It is found in the cytoplasm. It carries out the reaction tRNA(Met) + L-methionine + ATP = L-methionyl-tRNA(Met) + AMP + diphosphate. Functionally, is required not only for elongation of protein synthesis but also for the initiation of all mRNA translation through initiator tRNA(fMet) aminoacylation. This chain is Methionine--tRNA ligase, found in Ureaplasma parvum serovar 3 (strain ATCC 700970).